We begin with the raw amino-acid sequence, 511 residues long: Ribosome biogenesis protein YTM1 (511 aa).

The ubiquitin-like (UBL) domain stretch occupies residues 9–112; it reads VKVVFVTRDE…EVSLSIEYIR (104 aa). Residues 122–511 are sufficient for interaction with ERB1 and association with 66S pre-ribosomes; sequence SFSNPDWVAA…IQINNNPQSA (390 aa). WD repeat units follow at residues 124–168, 170–208, 248–287, 332–372, 383–423, 429–470, and 477–511; these read SNPD…TGQL, GHNS…YRRK, GHTA…MPAI, GHSA…AVQS, TRST…QVAT, GHTN…SLHV, and TENN…PQSA. A disordered region spans residues 207–228; the sequence is RKEPGQVGKKELNYDSEEDSDE. Basic and acidic residues predominate over residues 208 to 219; that stretch reads KEPGQVGKKELN.

This sequence belongs to the WD repeat WDR12/YTM1 family. As to quaternary structure, component of the NOP7 complex, composed of ERB1, NOP7 and YTM1. The complex is held together by ERB1, which interacts with NOP7 via its N-terminal domain and with YTM1 via a high-affinity interaction between the seven-bladed beta-propeller domains of the 2 proteins. The NOP7 complex associates with the 66S pre-ribosome. Interacts (via UBL domain) with MDN1 (via VWFA/MIDAS domain).

It localises to the nucleus. The protein localises to the nucleolus. Its subcellular location is the nucleoplasm. Functionally, component of the NOP7 complex, which is required for maturation of the 25S and 5.8S ribosomal RNAs and formation of the 60S ribosome. In Yarrowia lipolytica (strain CLIB 122 / E 150) (Yeast), this protein is Ribosome biogenesis protein YTM1.